The chain runs to 548 residues: Membrane protein insertase YidC (548 aa).

5 helical membrane-spanning segments follow: residues 6 to 26 (NLIL…WESD), 349 to 369 (TVFQ…TLLV), 424 to 444 (LGGC…YWAL), 455 to 475 (FALW…PILM), and 503 to 523 (PIIF…YWLV).

This sequence belongs to the OXA1/ALB3/YidC family. Type 1 subfamily. In terms of assembly, interacts with the Sec translocase complex via SecD. Specifically interacts with transmembrane segments of nascent integral membrane proteins during membrane integration.

It localises to the cell inner membrane. Functionally, required for the insertion and/or proper folding and/or complex formation of integral membrane proteins into the membrane. Involved in integration of membrane proteins that insert both dependently and independently of the Sec translocase complex, as well as at least some lipoproteins. Aids folding of multispanning membrane proteins. In Aeromonas salmonicida (strain A449), this protein is Membrane protein insertase YidC.